Consider the following 1578-residue polypeptide: BRD4-interacting chromatin-remodeling complex-associated protein (1578 aa).

Disordered stretches follow at residues Asp-80 to Cys-101, Pro-631 to Ala-673, and Ile-725 to Arg-951. A compositionally biased stretch (gly residues) spans Ala-86–Ala-96. 2 stretches are compositionally biased toward low complexity: residues Pro-631–Gln-662 and Ile-764–Pro-782. Pro residues-rich tracts occupy residues Met-793 to Gln-816, Pro-824 to Leu-841, and Pro-865 to His-888. The segment covering Leu-889–Ala-906 has biased composition (low complexity). The residue at position 929 (Ser-929) is a Phosphoserine. The residue at position 931 (Thr-931) is a Phosphothreonine. The span at Pro-942–Arg-951 shows a compositional bias: pro residues. N6-acetyllysine is present on Lys-1067. A disordered region spans residues Glu-1206–Ala-1316. 2 stretches are compositionally biased toward low complexity: residues Ser-1233–Ala-1247 and Ala-1275–Ser-1294. Lys-1327 is covalently cross-linked (Glycyl lysine isopeptide (Lys-Gly) (interchain with G-Cter in SUMO2)). 2 disordered regions span residues Asp-1342–Val-1435 and Val-1457–Arg-1578. A compositionally biased stretch (pro residues) spans Gln-1346–Pro-1370. Phosphoserine is present on Ser-1427. The segment covering Ala-1502 to Pro-1532 has biased composition (polar residues). The span at Gly-1538 to Pro-1553 shows a compositional bias: pro residues.

As to quaternary structure, component of the multiprotein chromatin-remodeling complexes SWI/SNF: SWI/SNF-A (BAF), SWI/SNF-B (PBAF) and related complexes. The canonical complex contains a catalytic subunit (either SMARCA4/BRG1/BAF190A or SMARCA2/BRM/BAF190B) and at least SMARCE1, ACTL6A/BAF53, SMARCC1/BAF155, SMARCC2/BAF170, and SMARCB1/SNF5/BAF47. Other subunits specific to each of the complexes may also be present permitting several possible combinations developmentally and tissue specific. Component of the SWI/SNF (GBAF) subcomplex, which includes at least BICRA or BICRAL (mutually exclusive), BRD9, SS18, the core BAF subunits, SMARCA2/BRM, SMARCA4/BRG1/BAF190A, ACTL6A/BAF53, SMARCC1/BAF155, and SMARCD1/BAF60A. Interacts with BRD4; the interaction bridges BRD4 to the GBAF complex.

Its subcellular location is the nucleus. Component of SWI/SNF chromatin remodeling subcomplex GBAF that carries out key enzymatic activities, changing chromatin structure by altering DNA-histone contacts within a nucleosome in an ATP-dependent manner. May play a role in BRD4-mediated gene transcription. In Mus musculus (Mouse), this protein is BRD4-interacting chromatin-remodeling complex-associated protein.